We begin with the raw amino-acid sequence, 459 residues long: MQEKKLWGGRFSESTDAFVEEFTESISFDKELALYDIKGSMAHAKMLGKQGIIPQEDAEKIVKGLQDIEQEIKENKFVWKKELEDVHMNIEKALTDKIGKAGGKLHTGRSRNDQVITAFRLYLKENTQDIINLLEDLQRKLLEKAKEYIDVVMPAYTHLQRAQPIRAAHYFLAYLEMFQRDKERFIDNLKRIDMLPLGSGAVAGVDFPIDREYVAKELGFSQIMRNSIDATSSRDFALEFLSNCAICMANMSRFSEDMIIYSSSEFSFVELPDKLTTGSSIMPQKKNPDVLELIRGKTGRVYGNLISLLTVVKGLPLAYNRDLQEDKGPVFDSVKTIKGSIIGITKIVEGLKLNREKTQLAAGGFALATDLANYLAEKGVPFRQAHHIVGSIVGYLVNQGRELESITLEELKQFSHLFEEDALKLLSPFVVADRRKSFGGTAKEQILSQIEYWDKILNK.

The protein belongs to the lyase 1 family. Argininosuccinate lyase subfamily.

It localises to the cytoplasm. The catalysed reaction is 2-(N(omega)-L-arginino)succinate = fumarate + L-arginine. It participates in amino-acid biosynthesis; L-arginine biosynthesis; L-arginine from L-ornithine and carbamoyl phosphate: step 3/3. The protein is Argininosuccinate lyase of Sulfurihydrogenibium sp. (strain YO3AOP1).